Consider the following 214-residue polypeptide: Probable maleylacetoacetate isomerase (214 aa).

Positions Gln4 to Pro84 constitute a GST N-terminal domain. Glutathione is bound by residues Ser14 to Arg19, Val56, Glu68 to Ser69, Gln108, and Asn112 to Lys114. The GST C-terminal domain occupies Asp89–Leu212.

The protein belongs to the GST superfamily. Zeta family. Glutathione serves as cofactor.

The protein localises to the cytoplasm. It carries out the reaction 4-maleylacetoacetate = 4-fumarylacetoacetate. Its pathway is amino-acid degradation; L-phenylalanine degradation; acetoacetate and fumarate from L-phenylalanine: step 5/6. The chain is Probable maleylacetoacetate isomerase (gst-42) from Caenorhabditis elegans.